Here is an 828-residue protein sequence, read N- to C-terminus: MEESSVTIGTIDVSYLPNSSEYSLGRCKHTNEDWVDCGFKPTFFRSATLKWKESLMSRKRPFVGRCCYSCTPQSWERFFNPSIPSLGLRNVIYINETHTRHRGWLARRLSYILFVQERDVHKGMFATSITDNVLNSSRVQEAIAEVAAELNPDGSAQQQSKAIQKVKRKARKILQEMVATVSPGMIRLTGWVLLKLFNSFFWNIQIHKGQLEMVKAATETNLPLLFLPVHRSHIDYLLLTFILFCHNIKAPYIASGNNLNIPIFSTLIHKLGGFFIRRRLDETPDGRKDILYRALLHGHIVELLRQQQFLEIFLEGTRSRSGKTSCARAGLLSVVVDTLSSNTIPDILVIPVGISYDRIIEGHYNGEQLGKPKKNESLWSVARGVIRMLRKNYGYVRVDFAQPFSLKEYLEGQSQKPVSAPLSLEQALLPAILPSRPDAAAAEHEDMSSNESRNAADEAFRRRLIANLAEHILFTASKSCAIMSTHIVACLLLYRHRQGIHLSTLVEDFFVMKEEVLARDFDLGFSGNSEDVVMHAIQLLGNCVTITHTSRKDEFFITPSTTVPSVFELNFYSNGVLHVFIMEAIIACSIYAVQNKRGSGGSAGGLGNLISQEQLVRKAASLCYLLSNEGTISLPCQTFYQVCQETVGKFIQYGILTVAEQDDQEDVSPGLAEQQWNKKLPEPLNWRSDEEDEDSDFGEEQRDCYLKVSQAKEHQQFITFLQRLLGPLLEAYSSAAIFVHTFRGPVPESEYLQKLHRYLLTRTERNVAVYAESATYCLVKNAVKMFKDIGVFKETKQKRASVLELSTTFLPQGSRQKLLEYILSFVVL.

Over 1 to 87 (MEESSVTIGT…FFNPSIPSLG (87 aa)) the chain is Cytoplasmic. Positions 80-120 (NPSIPSLGLRNVIYINETHTRHRGWLARRLSYILFVQERDV) are important for mitochondrial localization. An intramembrane segment occupies 88–118 (LRNVIYINETHTRHRGWLARRLSYILFVQER). The Cytoplasmic portion of the chain corresponds to 119 to 828 (DVHKGMFATS…LEYILSFVVL (710 aa)). Positions 230 to 235 (HRSHID) match the HXXXXD motif motif. Residues R278, R279, K288, R293, and R328 each coordinate CoA. S380 is modified (phosphoserine). R462 lines the CoA pocket. S688 and S695 each carry phosphoserine. An N6-acetyllysine mark is found at K780 and K784.

It belongs to the GPAT/DAPAT family.

It localises to the mitochondrion outer membrane. The enzyme catalyses sn-glycerol 3-phosphate + an acyl-CoA = a 1-acyl-sn-glycero-3-phosphate + CoA. The catalysed reaction is sn-glycerol 3-phosphate + hexadecanoyl-CoA = 1-hexadecanoyl-sn-glycero-3-phosphate + CoA. It catalyses the reaction (9Z,12Z)-octadecadienoyl-CoA + sn-glycerol 3-phosphate = 1-(9Z,12Z)-octadecadienoyl-sn-glycero-3-phosphate + CoA. It carries out the reaction sn-glycerol 3-phosphate + (9Z)-octadecenoyl-CoA = 1-(9Z-octadecenoyl)-sn-glycero-3-phosphate + CoA. The enzyme catalyses sn-glycerol 3-phosphate + octadecanoyl-CoA = 1-octadecanoyl-sn-glycero-3-phosphate + CoA. The catalysed reaction is dodecanoyl-CoA + sn-glycerol 3-phosphate = 1-dodecanoyl-sn-glycerol 3-phosphate + CoA. It catalyses the reaction 1-acyl-sn-glycero-3-phospho-(1'-sn-glycerol) + an acyl-CoA = a 1,2-diacyl-sn-glycero-3-phospho-(1'-sn-glycerol) + CoA. The protein operates within phospholipid metabolism; CDP-diacylglycerol biosynthesis; CDP-diacylglycerol from sn-glycerol 3-phosphate: step 1/3. Functionally, mitochondrial membrane protein that catalyzes the essential first step of biosynthesis of glycerolipids such as triglycerides, phosphatidic acids and lysophosphatidic acids. Esterifies acyl-group from acyl-coenzyme A (acyl-CoA) to the sn-1 position of glycerol-3-phosphate, to produce lysophosphatidic acid. Has a narrow hydrophobic binding cleft that selects for a linear acyl chain. Catalytic activity is higher for substrates with a 16-carbon acyl chain. The sequence is that of Glycerol-3-phosphate acyltransferase 1, mitochondrial from Rattus norvegicus (Rat).